A 417-amino-acid chain; its full sequence is D-amino acid dehydrogenase (417 aa).

Residue 3–17 (VVILGSGVVGVSTAW) participates in FAD binding.

This sequence belongs to the DadA oxidoreductase family. Requires FAD as cofactor.

It catalyses the reaction a D-alpha-amino acid + A + H2O = a 2-oxocarboxylate + AH2 + NH4(+). The protein operates within amino-acid degradation; D-alanine degradation; NH(3) and pyruvate from D-alanine: step 1/1. In terms of biological role, oxidative deamination of D-amino acids. The chain is D-amino acid dehydrogenase from Pectobacterium carotovorum subsp. carotovorum (strain PC1).